Consider the following 411-residue polypeptide: Serine--tRNA ligase (411 aa).

An L-serine-binding site is contributed by 226-228; the sequence is TSE. 257–259 is an ATP binding site; the sequence is RKE. An L-serine-binding site is contributed by glutamate 280. Position 344-347 (344-347) interacts with ATP; it reads EISS. Serine 379 contributes to the L-serine binding site.

It belongs to the class-II aminoacyl-tRNA synthetase family. Type-1 seryl-tRNA synthetase subfamily. Homodimer. The tRNA molecule binds across the dimer.

The protein localises to the cytoplasm. It catalyses the reaction tRNA(Ser) + L-serine + ATP = L-seryl-tRNA(Ser) + AMP + diphosphate + H(+). It carries out the reaction tRNA(Sec) + L-serine + ATP = L-seryl-tRNA(Sec) + AMP + diphosphate + H(+). It participates in aminoacyl-tRNA biosynthesis; selenocysteinyl-tRNA(Sec) biosynthesis; L-seryl-tRNA(Sec) from L-serine and tRNA(Sec): step 1/1. Catalyzes the attachment of serine to tRNA(Ser). Is also able to aminoacylate tRNA(Sec) with serine, to form the misacylated tRNA L-seryl-tRNA(Sec), which will be further converted into selenocysteinyl-tRNA(Sec). In Campylobacter jejuni subsp. jejuni serotype O:6 (strain 81116 / NCTC 11828), this protein is Serine--tRNA ligase.